The primary structure comprises 280 residues: Probable endonuclease 4 (280 aa).

9 residues coordinate Zn(2+): histidine 69, histidine 109, glutamate 145, aspartate 179, histidine 182, histidine 216, aspartate 229, histidine 231, and glutamate 261.

Belongs to the AP endonuclease 2 family. It depends on Zn(2+) as a cofactor.

It carries out the reaction Endonucleolytic cleavage to 5'-phosphooligonucleotide end-products.. Endonuclease IV plays a role in DNA repair. It cleaves phosphodiester bonds at apurinic or apyrimidinic (AP) sites, generating a 3'-hydroxyl group and a 5'-terminal sugar phosphate. The chain is Probable endonuclease 4 from Erwinia tasmaniensis (strain DSM 17950 / CFBP 7177 / CIP 109463 / NCPPB 4357 / Et1/99).